The sequence spans 3326 residues: Deoxyribonuclease CdiA (3326 aa).

Residues 36 to 342 (TADGVLTSGG…ARGALTLTGS (307 aa)) are two-partner system transport domain (TPS). The FHA-1 stretch occupies residues 343 to 1396 (YAGAGSLYSD…ITVRTGTLTN (1054 aa)). A receptor binding domain (RBD) region spans residues 1397 to 1765 (QREGLVVTES…QQLGSPSLTD (369 aa)). Residues 1766–1951 (YPLPTSQSGL…LAQADKTNLQ (186 aa)) are YP domain. Residues 1959 to 2097 (SVSLSAGGDI…AGGPLQLAAG (139 aa)) form a periplasmic FHA-1 repeat (pFR) region. The tract at residues 2125-2660 (QGLVQSTVAS…SNRYDSKQTS (536 aa)) is FHA-2. A VENN CT cleavage motif motif is present at residues 3060 to 3063 (VENN). Residues 3060-3326 (VENNSLGDIA…DRNRQIGVIK (267 aa)) are CT domain.

The protein in the N-terminal section; belongs to the CdiA toxin family. As to quaternary structure, the C-terminal (CT) domain interacts with cognate CdiI but not non-cognate CdiI from E.coli strain 536 / UPEC.

It is found in the target cell. It localises to the target cell cytoplasm. Its function is as follows. Toxic component of a toxin-immunity protein module, which functions as a cellular contact-dependent growth inhibition (CDI) system. CDI modules allow bacteria to communicate with and inhibit the growth of closely related neighboring bacteria in a contact-dependent fashion. CDI is neutralized by its cognate immunity protein CdiI, but not by non-cognate CdiI from other bacteria. The C-terminal domain (CT) has strong DNase activity; this activity is inhibited by cognate CdiI. The CdiA protein is thought to be exported from the cell through the central lumen of CdiB, the other half of its two-partner system (TPS). The TPS domain probably remains associated with CdiB while the FHA-1 domain forms an extended filament with the receptor-binding domain (RBD) at its extremity; in the secretion arrested state the C-terminus of the RBD and YP domains form a hairpin-like structure as the FHA-2, PT and CT domains are periplasmic. The YP domain is probably responsible for this arrest at the point where it re-enters the host cell periplasm. Upon binding to a target cell outer membrane receptor a signal is transmitted to activate secretion. The filament elongates slightly, the rest of CdiA is secreted and the FHA-2 domain becomes stably associated with the target cell's outer membrane where it facilitates entry of the toxic CT domain into the target cell periplasm. From there the toxic CT domain is cleaved and gains access to the target cell cytoplasm via an inner membrane protein. The polypeptide is Deoxyribonuclease CdiA (Dickeya dadantii (strain 3937) (Erwinia chrysanthemi (strain 3937))).